The primary structure comprises 161 residues: Small ribosomal subunit protein uS9 (161 aa).

A compositionally biased stretch (polar residues) spans 1-21; it reads MATLQSLADLNRANTQTSNPE. The disordered stretch occupies residues 1-25; that stretch reads MATLQSLADLNRANTQTSNPENEAP.

Belongs to the universal ribosomal protein uS9 family.

This Methylorubrum populi (strain ATCC BAA-705 / NCIMB 13946 / BJ001) (Methylobacterium populi) protein is Small ribosomal subunit protein uS9.